The sequence spans 311 residues: Malate dehydrogenase (311 aa).

NAD(+) is bound by residues 10–15 (GAGRVG) and Asp35. Residues Arg84 and Arg90 each coordinate substrate. NAD(+)-binding positions include Asn97 and 120 to 122 (VTN). Substrate is bound by residues Asn122 and Arg153. His177 (proton acceptor) is an active-site residue.

This sequence belongs to the LDH/MDH superfamily. MDH type 3 family.

The enzyme catalyses (S)-malate + NAD(+) = oxaloacetate + NADH + H(+). Functionally, catalyzes the reversible oxidation of malate to oxaloacetate. The sequence is that of Malate dehydrogenase from Nitrosococcus oceani (strain ATCC 19707 / BCRC 17464 / JCM 30415 / NCIMB 11848 / C-107).